Here is a 682-residue protein sequence, read N- to C-terminus: Tetratricopeptide repeat protein 39B (682 aa).

TPR repeat units lie at residues 393–426 and 626–659; these read SLVL…QEEW and PFTL…YKDY.

It belongs to the TTC39 family.

Regulates high density lipoprotein (HDL) cholesterol metabolism by promoting the ubiquitination and degradation of the oxysterols receptors LXR (NR1H2 and NR1H3). The polypeptide is Tetratricopeptide repeat protein 39B (Homo sapiens (Human)).